A 135-amino-acid chain; its full sequence is ATP synthase epsilon chain (135 aa).

The protein belongs to the ATPase epsilon chain family. As to quaternary structure, F-type ATPases have 2 components, CF(1) - the catalytic core - and CF(0) - the membrane proton channel. CF(1) has five subunits: alpha(3), beta(3), gamma(1), delta(1), epsilon(1). CF(0) has three main subunits: a, b and c.

It localises to the cell inner membrane. Functionally, produces ATP from ADP in the presence of a proton gradient across the membrane. This Rhodopseudomonas palustris (strain BisA53) protein is ATP synthase epsilon chain.